A 610-amino-acid chain; its full sequence is Menin (610 aa).

Positions 214–390 (GVAERSWLYL…SLLEAGEERP (177 aa)) are interaction with FANCD2. The segment at 460–552 (REAEAAEAEE…SPPPEGPVLT (93 aa)) is disordered. The span at 484-500 (RRESKPEEPPPPKKPAL) shows a compositional bias: basic and acidic residues. Phosphoserine occurs at positions 487 and 543. T594 bears the Phosphothreonine mark.

Component of the MLL-HCF complex, at least composed of KMT2A/MLL1, MEN1, ASH2L, RBBP5, DPY30, WDR5, HCFC1 and HCFC2. Component of the menin-associated histone methyltransferase complex, at least composed of KMT2B/MLL4, MEN1, ASH2L, RBBP5, DPY30 and WDR5. Interacts with POLR2B. Interacts with POLR2A phosphorylated at 'Ser-5', but not with the unphosphorylated, nor 'Ser-2' phosphorylated POLR2A forms. Interacts with FANCD2 and DBF4. Interacts with JUND (via MBM motif); inhibits the interaction of JUND with MAPK10 and the phosphorylation of JUND by MAP kinases MAPK8 and MAPK10. Interacts with SMAD3, but not with SMAD2, nor SMAD4. Directly interacts with NFKB1, NFKB2 and RELA. Interacts with KMT2A (via MBM motif). The KMT2A-MEN1 complex interacts with PSIP1 with a greater affinity as MEN1 enhances interaction of KMT2A with PSIP1. Interacts with the fusion protein KMT2A-MLLT3. In terms of tissue distribution, ubiquitous.

It localises to the nucleus. In terms of biological role, essential component of a MLL/SET1 histone methyltransferase (HMT) complex, a complex that specifically methylates 'Lys-4' of histone H3 (H3K4). Functions as a transcriptional regulator. Binds to the TERT promoter and represses telomerase expression. Plays a role in TGFB1-mediated inhibition of cell-proliferation, possibly regulating SMAD3 transcriptional activity. Represses JUND-mediated transcriptional activation on AP1 sites, as well as that mediated by NFKB subunit RELA. Positively regulates HOXC8 and HOXC6 gene expression. May be involved in normal hematopoiesis through the activation of HOXA9 expression. May be involved in DNA repair. In Homo sapiens (Human), this protein is Menin (MEN1).